Here is a 189-residue protein sequence, read N- to C-terminus: Photosystem I assembly protein Ycf4 (189 aa).

A run of 2 helical transmembrane segments spans residues 25–45 (SVYF…LAGL) and 62–82 (LVFI…SLAG).

The protein belongs to the Ycf4 family.

The protein localises to the cellular thylakoid membrane. In terms of biological role, seems to be required for the assembly of the photosystem I complex. In Synechococcus sp. (strain JA-2-3B'a(2-13)) (Cyanobacteria bacterium Yellowstone B-Prime), this protein is Photosystem I assembly protein Ycf4.